Consider the following 182-residue polypeptide: Ribulose bisphosphate carboxylase small subunit, chloroplastic (182 aa).

The transit peptide at 1 to 58 (MASSMISSATVATVSRATPAQATMVAPFTGLKSTAAFPATRKSNNDITSLASNGGRVQ) directs the protein to the chloroplast.

Belongs to the RuBisCO small chain family. In terms of assembly, heterohexadecamer of 8 large and 8 small subunits.

It localises to the plastid. Its subcellular location is the chloroplast. RuBisCO catalyzes two reactions: the carboxylation of D-ribulose 1,5-bisphosphate, the primary event in carbon dioxide fixation, as well as the oxidative fragmentation of the pentose substrate. Both reactions occur simultaneously and in competition at the same active site. Although the small subunit is not catalytic it is essential for maximal activity. The polypeptide is Ribulose bisphosphate carboxylase small subunit, chloroplastic (Fagus crenata (Japanese beech)).